The following is a 274-amino-acid chain: Copper chaperone for superoxide dismutase (274 aa).

One can recognise an HMA domain in the interval 11 to 74 (MCALEFTVQM…LLESTGRQAV (64 aa)). Cu cation is bound by residues cysteine 22 and cysteine 25. Residue lysine 76 forms a Glycyl lysine isopeptide (Lys-Gly) (interchain with G-Cter in ubiquitin) linkage. The tract at residues 88 to 234 (AAVAIMEGSG…LACGIIARSA (147 aa)) is superoxide dismutase-like. Cysteine 141 and cysteine 227 are disulfide-bonded. Histidine 147, histidine 155, histidine 164, and aspartate 167 together coordinate Zn(2+). Glycyl lysine isopeptide (Lys-Gly) (interchain with G-Cter in ubiquitin) cross-links involve residues lysine 189, lysine 216, and lysine 241. Residues cysteine 244 and cysteine 246 each contribute to the Cu cation site. The residue at position 267 (serine 267) is a Phosphoserine.

It in the C-terminal section; belongs to the Cu-Zn superoxide dismutase family. In terms of assembly, homodimer, and heterodimer with SOD1. Interacts with COMMD1. Interacts with XIAP/BIRC4. Interacts with SLC31A1(via C-terminal domain); this interaction is Cu(1+)-mediated. The heterodimer CCS:SOD1 interacts with SLC31A1; this heterotrimer is Cu(1+)-mediated and its maintenance is regulated through SOD1 activation. The cofactor is Cu(2+). Requires Zn(2+) as cofactor. Ubiquitinion by XIAP/BIRC4 leads to enhancement of its chaperone activity toward its physiologic target, SOD1, rather than proteasomal degradation. XIAP/BIRC4 preferentially ubiquitinates at Lys-241.

It is found in the cytoplasm. Functionally, delivers copper to copper zinc superoxide dismutase (SOD1). The chain is Copper chaperone for superoxide dismutase from Rattus norvegicus (Rat).